Here is a 240-residue protein sequence, read N- to C-terminus: L-isoleucine-4-hydroxylase (240 aa).

Fe cation is bound by residues His159, Asp161, and His212.

It belongs to the iron/ascorbate-dependent oxidoreductase family. L-ascorbate is required as a cofactor. Requires Fe(2+) as cofactor.

It carries out the reaction L-isoleucine + 2-oxoglutarate + O2 = (4S)-4-hydroxy-L-isoleucine + succinate + CO2. Catalyzes the hydroxylation of L-isoleucine to produce (4S)-4-hydroxy-L-isoleucine. Can also catalyze the hydroxylation of L-leucine, L-norvaline, L-norleucine and L-allo-isoleucine, as well as the sulfoxidation of L-methionine, L-ethionine, S-methyl-L-cysteine, S-ethyl-L-cysteine, and S-allyl-L-cysteine. The chain is L-isoleucine-4-hydroxylase from Bacillus thuringiensis.